A 329-amino-acid chain; its full sequence is Thioredoxin domain-containing protein 6 (329 aa).

The region spanning 11–115 (QVNINTQELW…QKTILQQLEA (105 aa)) is the Thioredoxin domain. The NDK stretch occupies residues 157–303 (GKTCTLGIIK…LFPSFKFSDK (147 aa)). The interval 303-329 (KDKEAPPGAEAQTMVGPVEDPCMSERI) is disordered.

The protein belongs to the NDK family. Monomer and homodimer. In terms of tissue distribution, expressed in lung airway epithelium (at protein level).

It localises to the cytoplasm. Its subcellular location is the cytoskeleton. The protein localises to the cilium axoneme. It is found in the dynein axonemal particle. Its function is as follows. May be a regulator of microtubule physiology. This is Thioredoxin domain-containing protein 6 from Mus musculus (Mouse).